The primary structure comprises 1360 residues: DNA-directed RNA polymerase subunit beta (1360 aa).

It belongs to the RNA polymerase beta chain family. In terms of assembly, the RNAP catalytic core consists of 2 alpha, 1 beta, 1 beta' and 1 omega subunit. When a sigma factor is associated with the core the holoenzyme is formed, which can initiate transcription.

The catalysed reaction is RNA(n) + a ribonucleoside 5'-triphosphate = RNA(n+1) + diphosphate. Its function is as follows. DNA-dependent RNA polymerase catalyzes the transcription of DNA into RNA using the four ribonucleoside triphosphates as substrates. The protein is DNA-directed RNA polymerase subunit beta of Desulfotalea psychrophila (strain LSv54 / DSM 12343).